Reading from the N-terminus, the 509-residue chain is Ethanolamine-phosphate phospho-lyase (509 aa).

The residue at position 279 (K279) is an N6-(pyridoxal phosphate)lysine. A compositionally biased stretch (basic and acidic residues) spans 451–474 (EKTSAKRKVHNENSGDTNAKEKET). Residues 451 to 509 (EKTSAKRKVHNENSGDTNAKEKETCSSNSQERNPNDHAYRQSNGLHPESPTFTRKRIRT) form a disordered region.

This sequence belongs to the class-III pyridoxal-phosphate-dependent aminotransferase family. As to quaternary structure, homotetramer. Requires pyridoxal 5'-phosphate as cofactor.

It localises to the mitochondrion. It carries out the reaction phosphoethanolamine + H2O = acetaldehyde + NH4(+) + phosphate. Its function is as follows. Catalyzes the pyridoxal-phosphate-dependent breakdown of phosphoethanolamine, converting it to ammonia, inorganic phosphate and acetaldehyde. The polypeptide is Ethanolamine-phosphate phospho-lyase (etnppl) (Xenopus laevis (African clawed frog)).